Here is a 106-residue protein sequence, read N- to C-terminus: Small ribosomal subunit protein uS17 (106 aa).

The protein belongs to the universal ribosomal protein uS17 family. As to quaternary structure, part of the 30S ribosomal subunit.

One of the primary rRNA binding proteins, it binds specifically to the 5'-end of 16S ribosomal RNA. This Methanosphaera stadtmanae (strain ATCC 43021 / DSM 3091 / JCM 11832 / MCB-3) protein is Small ribosomal subunit protein uS17.